We begin with the raw amino-acid sequence, 442 residues long: GDP-L-galactose phosphorylase 1 (442 aa).

H238 serves as the catalytic Tele-GMP-histidine intermediate.

It belongs to the GDPGP1 family. Interacts with TLP1. In terms of tissue distribution, expressed in leaves, stems, roots, flowers and siliques. Highest expression in green tissues.

The protein localises to the cytoplasm. Its subcellular location is the nucleus. It carries out the reaction GDP-beta-L-galactose + phosphate = beta-L-galactose 1-phosphate + GDP + H(+). The protein operates within cofactor biosynthesis; L-ascorbate biosynthesis via GDP-alpha-D-mannose pathway; L-ascorbate from GDP-alpha-D-mannose: step 2/5. Its activity is regulated as follows. Not inhibited by dithiothreitol, N-ethylmaleimide, phenylmethane sulfonyl fluoride, ascorbate, L-galactose and L-galactonolactone. Functionally, catalyzes a reaction of the Smirnoff-Wheeler pathway, the major route to ascorbate biosynthesis in plants. Acts as a phosphorylase rather than as a transferase. Uses preferentially GDP-L-galactose and GDP-D-glucose as substrates. Lower activity with GDP-L-fucose, very low activity with GDP-D-mannose, and no activity with UDP-D-glucose, UDP-D-galactose or ADP-D-glucose. Highly specific for inorganic phosphate as the guanylyl acceptor. In Arabidopsis thaliana (Mouse-ear cress), this protein is GDP-L-galactose phosphorylase 1 (VTC2).